The chain runs to 64 residues: Frontoxin V (64 aa).

Cystine bridges form between Cys-3/Cys-24, Cys-6/Cys-11, Cys-17/Cys-41, Cys-45/Cys-57, and Cys-58/Cys-63.

In terms of tissue distribution, expressed by the venom gland.

Its subcellular location is the secreted. Produces peripheral paralysis by blocking neuromuscular transmission at the postsynaptic site. Binds to the muscular nicotinic acetylcholine receptor (nAChR). The chain is Frontoxin V from Micrurus frontalis (Coral snake).